A 736-amino-acid polypeptide reads, in one-letter code: ABC transporter G family member 16 (736 aa).

Residues 88-332 (LDFHDLVPWR…FAGFGNPIPE (245 aa)) form the ABC transporter domain. 125–132 (GASGSGKS) is an ATP binding site. 7 helical membrane-spanning segments follow: residues 410-430 (SVINHGGGTLAVPAFANPFWI), 449-469 (LLGMRLATVIVTGFILATVFW), 484-504 (FFAFAMSTMFYTCADALPVFL), 525-545 (VLSHAIVTFPSLIFLSLAFAV), 569-589 (ASFWSGSSFVTFLSGVVPHVM), 590-610 (LGYTIVVAILAYFLLFSGFFI), and 709-729 (LLITVGFGFLFRILFYLCLLL). The ABC transmembrane type-2 domain maps to 430-640 (IEIKTLTRRS…PYEAVLQNEF (211 aa)).

Belongs to the ABC transporter superfamily. ABCG family. Eye pigment precursor importer (TC 3.A.1.204) subfamily.

It localises to the membrane. The sequence is that of ABC transporter G family member 16 (ABCG16) from Arabidopsis thaliana (Mouse-ear cress).